The sequence spans 222 residues: Dense granule protein 3 (222 aa).

2 consecutive transmembrane segments (helical) span residues 22-42 (LIPF…GGLA) and 162-182 (IPGY…RKVL). The short motif at 219-222 (KKQT) is the Prevents secretion from ER element.

In terms of assembly, homodimer. Interacts (via N-terminus) with human host CAMLG (via N-terminus).

The protein localises to the cytoplasm. It localises to the host endoplasmic reticulum. It is found in the parasitophorous vacuole membrane. In terms of biological role, direct host-parasite interaction occurs at the cytoplasmic faces of the parasitophorous vacuole membrane (PVM) and the host endoplasmic reticulum (ER) membrane via GRA3 and host CAMLG association. Direct insertion of GRA3 ER retrieval motif into the host ER membrane contributes to the host ER recruitment to the PVM. In Toxoplasma gondii, this protein is Dense granule protein 3.